The sequence spans 103 residues: Small ribosomal subunit protein uS10 (103 aa).

This sequence belongs to the universal ribosomal protein uS10 family. Part of the 30S ribosomal subunit.

In terms of biological role, involved in the binding of tRNA to the ribosomes. This Wigglesworthia glossinidia brevipalpis protein is Small ribosomal subunit protein uS10.